The following is an 801-amino-acid chain: Growth-differentiation transition protein 7 (801 aa).

Residues 1–22 form the signal peptide; sequence MIKTILIKLILLVIFCYHFLFA.

The protein belongs to the GDT family.

It is found in the secreted. The polypeptide is Growth-differentiation transition protein 7 (gdt7) (Dictyostelium discoideum (Social amoeba)).